A 1588-amino-acid polypeptide reads, in one-letter code: uncharacterized protein (1588 aa).

Residues 486–495 (RKRLTSKTED) are compositionally biased toward basic and acidic residues. Disordered stretches follow at residues 486–515 (RKRL…KRRP) and 1146–1176 (GGQD…RELN). Residues 498 to 507 (NQWTRDCQNS) are compositionally biased toward polar residues. Positions 1150 to 1169 (NVSDQSENQSENQSLESETS) are enriched in low complexity.

It localises to the virion. This is an uncharacterized protein from Acanthamoeba polyphaga (Amoeba).